The primary structure comprises 196 residues: Holliday junction branch migration complex subunit RuvA (196 aa).

The domain I stretch occupies residues 1-63 (MINKIYGKIV…DDDVKLFGFL (63 aa)). Residues 64-142 (NISEREVFED…KGDESSSYML (79 aa)) are domain II. A region of interest (flexible linker) is located at residue lysine 143. Residues 143–196 (KFKELEQSIVNMGFDRKLVVVAFREIMLSDKFLILKEAEQEQFLFTETLKRLSV) form a domain III region.

It belongs to the RuvA family. As to quaternary structure, homotetramer. Forms an RuvA(8)-RuvB(12)-Holliday junction (HJ) complex. HJ DNA is sandwiched between 2 RuvA tetramers; dsDNA enters through RuvA and exits via RuvB. An RuvB hexamer assembles on each DNA strand where it exits the tetramer. Each RuvB hexamer is contacted by two RuvA subunits (via domain III) on 2 adjacent RuvB subunits; this complex drives branch migration. In the full resolvosome a probable DNA-RuvA(4)-RuvB(12)-RuvC(2) complex forms which resolves the HJ.

The protein resides in the cytoplasm. The RuvA-RuvB-RuvC complex processes Holliday junction (HJ) DNA during genetic recombination and DNA repair, while the RuvA-RuvB complex plays an important role in the rescue of blocked DNA replication forks via replication fork reversal (RFR). RuvA specifically binds to HJ cruciform DNA, conferring on it an open structure. The RuvB hexamer acts as an ATP-dependent pump, pulling dsDNA into and through the RuvAB complex. HJ branch migration allows RuvC to scan DNA until it finds its consensus sequence, where it cleaves and resolves the cruciform DNA. The protein is Holliday junction branch migration complex subunit RuvA of Borrelia duttonii (strain Ly).